A 476-amino-acid polypeptide reads, in one-letter code: Glycogen synthase (476 aa).

Residue K15 coordinates ADP-alpha-D-glucose.

This sequence belongs to the glycosyltransferase 1 family. Bacterial/plant glycogen synthase subfamily.

It catalyses the reaction [(1-&gt;4)-alpha-D-glucosyl](n) + ADP-alpha-D-glucose = [(1-&gt;4)-alpha-D-glucosyl](n+1) + ADP + H(+). It participates in glycan biosynthesis; glycogen biosynthesis. Functionally, synthesizes alpha-1,4-glucan chains using ADP-glucose. The chain is Glycogen synthase from Mycoplasma mobile (strain ATCC 43663 / 163K / NCTC 11711) (Mesomycoplasma mobile).